A 234-amino-acid chain; its full sequence is Small ribosomal subunit protein eS4 (234 aa).

An S4 RNA-binding domain is found at 37–99; that stretch reads VPLLIVLRDV…REEYYRVFPG (63 aa).

This sequence belongs to the eukaryotic ribosomal protein eS4 family.

The sequence is that of Small ribosomal subunit protein eS4 (rps4e) from Haloarcula marismortui (strain ATCC 43049 / DSM 3752 / JCM 8966 / VKM B-1809) (Halobacterium marismortui).